Consider the following 125-residue polypeptide: Large ribosomal subunit protein bL12 (125 aa).

Belongs to the bacterial ribosomal protein bL12 family. As to quaternary structure, homodimer. Part of the ribosomal stalk of the 50S ribosomal subunit. Forms a multimeric L10(L12)X complex, where L10 forms an elongated spine to which 2 to 4 L12 dimers bind in a sequential fashion. Binds GTP-bound translation factors.

Its function is as follows. Forms part of the ribosomal stalk which helps the ribosome interact with GTP-bound translation factors. Is thus essential for accurate translation. The protein is Large ribosomal subunit protein bL12 of Helicobacter acinonychis (strain Sheeba).